The sequence spans 328 residues: Phenylalanine--tRNA ligase alpha subunit (328 aa).

Glu-253 serves as a coordination point for Mg(2+).

Belongs to the class-II aminoacyl-tRNA synthetase family. Phe-tRNA synthetase alpha subunit type 1 subfamily. As to quaternary structure, tetramer of two alpha and two beta subunits. Requires Mg(2+) as cofactor.

It is found in the cytoplasm. It carries out the reaction tRNA(Phe) + L-phenylalanine + ATP = L-phenylalanyl-tRNA(Phe) + AMP + diphosphate + H(+). The sequence is that of Phenylalanine--tRNA ligase alpha subunit from Coxiella burnetii (strain Dugway 5J108-111).